Consider the following 321-residue polypeptide: 4-hydroxy-3-methylbut-2-enyl diphosphate reductase (321 aa).

A [4Fe-4S] cluster-binding site is contributed by cysteine 13. Positions 41 and 75 each coordinate (2E)-4-hydroxy-3-methylbut-2-enyl diphosphate. Dimethylallyl diphosphate-binding residues include histidine 41 and histidine 75. Isopentenyl diphosphate contacts are provided by histidine 41 and histidine 75. Cysteine 97 contacts [4Fe-4S] cluster. Histidine 125 lines the (2E)-4-hydroxy-3-methylbut-2-enyl diphosphate pocket. Residue histidine 125 participates in dimethylallyl diphosphate binding. Residue histidine 125 coordinates isopentenyl diphosphate. Glutamate 127 acts as the Proton donor in catalysis. Residue threonine 168 participates in (2E)-4-hydroxy-3-methylbut-2-enyl diphosphate binding. Cysteine 225 lines the [4Fe-4S] cluster pocket. Residues serine 253, serine 254, asparagine 255, and serine 302 each coordinate (2E)-4-hydroxy-3-methylbut-2-enyl diphosphate. Residues serine 253, serine 254, asparagine 255, and serine 302 each contribute to the dimethylallyl diphosphate site. Isopentenyl diphosphate is bound by residues serine 253, serine 254, asparagine 255, and serine 302.

The protein belongs to the IspH family. [4Fe-4S] cluster is required as a cofactor.

It catalyses the reaction isopentenyl diphosphate + 2 oxidized [2Fe-2S]-[ferredoxin] + H2O = (2E)-4-hydroxy-3-methylbut-2-enyl diphosphate + 2 reduced [2Fe-2S]-[ferredoxin] + 2 H(+). The catalysed reaction is dimethylallyl diphosphate + 2 oxidized [2Fe-2S]-[ferredoxin] + H2O = (2E)-4-hydroxy-3-methylbut-2-enyl diphosphate + 2 reduced [2Fe-2S]-[ferredoxin] + 2 H(+). Its pathway is isoprenoid biosynthesis; dimethylallyl diphosphate biosynthesis; dimethylallyl diphosphate from (2E)-4-hydroxy-3-methylbutenyl diphosphate: step 1/1. It participates in isoprenoid biosynthesis; isopentenyl diphosphate biosynthesis via DXP pathway; isopentenyl diphosphate from 1-deoxy-D-xylulose 5-phosphate: step 6/6. In terms of biological role, catalyzes the conversion of 1-hydroxy-2-methyl-2-(E)-butenyl 4-diphosphate (HMBPP) into a mixture of isopentenyl diphosphate (IPP) and dimethylallyl diphosphate (DMAPP). Acts in the terminal step of the DOXP/MEP pathway for isoprenoid precursor biosynthesis. This is 4-hydroxy-3-methylbut-2-enyl diphosphate reductase from Pelodictyon phaeoclathratiforme (strain DSM 5477 / BU-1).